Reading from the N-terminus, the 148-residue chain is Large ribosomal subunit protein bL9 (148 aa).

This sequence belongs to the bacterial ribosomal protein bL9 family.

Functionally, binds to the 23S rRNA. This is Large ribosomal subunit protein bL9 from Heliobacterium modesticaldum (strain ATCC 51547 / Ice1).